Here is a 325-residue protein sequence, read N- to C-terminus: Germination protease (325 aa).

Residues 1–7 (MYNVRTD) constitute a propeptide that is removed on maturation.

It belongs to the peptidase A25 family. In terms of assembly, homotetramer. Post-translationally, autoproteolytically processed. The inactive tetrameric zymogen termed p46 autoprocesses to a smaller form termed p41, which is active only during spore germination.

The enzyme catalyses Endopeptidase action with P4 Glu or Asp, P1 preferably Glu &gt; Asp, P1' hydrophobic and P2' Ala.. Functionally, initiates the rapid degradation of small, acid-soluble proteins during spore germination. This is Germination protease from Clostridium perfringens (strain 13 / Type A).